Consider the following 368-residue polypeptide: MKMQTPKESLSERLSALQDKILDHYENDSKDINSQISYWQLIRLENAILFTAREHGITKLNHQVVPPINISKSKAHKAIELQMALKGLAQSKYNNEEWTLQDTCEELWNTEPSQCFKKGGKTVHVYFDGNKDNCMNYVVWDSIYYITETGIWDKTAACVSYWGVYYIKDGDTTYYVQFKSECEKYGNSNTWEVQYGGNVIDCNDSMCSTSDDTVSATQIVRQLQHASTSTPKTASVGTPKPHIQTPATKRPRQCGLTEQHHGRVNTHVHNPLLCSSTSNNKRRKVCSGNTTPIIHLKGDKNSLKCLRYRLRKYADHYSEISSTWHWTGCNKNTGILTVTYNSEVQRNTFLDVVTIPNSVQISVGYMTI.

A transactivation domain region spans residues 1-207 (MKMQTPKESL…NVIDCNDSMC (207 aa)). A compositionally biased stretch (polar residues) spans 227–236 (STSTPKTASV). Residues 227–251 (STSTPKTASVGTPKPHIQTPATKRP) form a disordered region. The segment at 290-368 (TTPIIHLKGD…VQISVGYMTI (79 aa)) is DNA-binding domain. Lysine 297 participates in a covalent cross-link: Glycyl lysine isopeptide (Lys-Gly) (interchain with G-Cter in SUMO).

This sequence belongs to the papillomaviridae E2 protein family. Binds DNA as homodimer. Interacts with protein E1; this interaction greatly increases E1 DNA-binding activity. Interacts with protein L1; this interaction enhances E2-dependent replication and transcription activation. Interacts with protein L2; this interaction inhibits E2 transcriptional activity but not DNA replication function E2. Interacts with protein E7; this interaction inhibits E7 oncogenic activity. Interacts with host TAF1; this interaction modulates E2-dependent transcriptional regulation. Interacts with host BRD4; this interaction mediates E2 transcriptional activation function. Additionally, the interaction with host BRD4 on mitotic chromosomes mediates tethering of the viral genome. Interacts with host TOPBP1; this interaction is required for optimal viral DNA replication. In terms of processing, phosphorylated. Post-translationally, sumoylation plays a regulatory role in E2 transcriptional activity.

Its subcellular location is the host nucleus. In terms of biological role, plays a role in the initiation of viral DNA replication. A dimer of E2 interacts with a dimer of E1 in order to improve specificity of E1 DNA binding activity. Once the complex recognizes and binds DNA at specific sites, the E2 dimer is removed from DNA. E2 also regulates viral transcription through binding to the E2RE response element (5'-ACCNNNNNNGGT-3') present in multiple copies in the regulatory regions of the viral genome. Activates or represses transcription depending on E2RE's position with regards to proximal promoter elements including the TATA-box. Repression occurs by sterically hindering the assembly of the transcription initiation complex. The chain is Regulatory protein E2 from Human papillomavirus 45.